A 2523-amino-acid polypeptide reads, in one-letter code: uncharacterized protein (2523 aa).

It belongs to the mycobacterial PPE family.

Probably plays a role in host phagosome maturation arrest. This is an uncharacterized protein from Mycobacterium tuberculosis (strain ATCC 25618 / H37Rv).